Reading from the N-terminus, the 267-residue chain is Protein BMH1 (267 aa).

S2 carries the N-acetylserine modification. K76 is covalently cross-linked (Glycyl lysine isopeptide (Lys-Gly) (interchain with G-Cter in ubiquitin)). S89 carries the phosphoserine modification. A disordered region spans residues 236–267 (DMSESGQAEDQQQQQQHQQQQPPAAAEGEAPK). Residues 243-267 (AEDQQQQQQHQQQQPPAAAEGEAPK) show a composition bias toward low complexity.

Belongs to the 14-3-3 family. In terms of assembly, homodimer. Interacts with NTH1 (via N-terminus when phosphorylated by PKA); the interaction is direct and activates NTH1. Interacts with FIN1.

Its function is as follows. Involved in growth regulation. The chain is Protein BMH1 (BMH1) from Saccharomyces cerevisiae (strain ATCC 204508 / S288c) (Baker's yeast).